Consider the following 397-residue polypeptide: Dual-specificity RNA methyltransferase RlmN (397 aa).

Catalysis depends on Glu120, which acts as the Proton acceptor. Residues 126–369 (ETDRGTLCVS…VRTPRGRDIL (244 aa)) form the Radical SAM core domain. Cys133 and Cys372 are disulfide-bonded. [4Fe-4S] cluster is bound by residues Cys140, Cys144, and Cys147. Residues 198 to 199 (GE), Ser230, 252 to 254 (SLH), and Asn329 each bind S-adenosyl-L-methionine. Cys372 acts as the S-methylcysteine intermediate in catalysis.

It belongs to the radical SAM superfamily. RlmN family. It depends on [4Fe-4S] cluster as a cofactor.

Its subcellular location is the cytoplasm. The catalysed reaction is adenosine(2503) in 23S rRNA + 2 reduced [2Fe-2S]-[ferredoxin] + 2 S-adenosyl-L-methionine = 2-methyladenosine(2503) in 23S rRNA + 5'-deoxyadenosine + L-methionine + 2 oxidized [2Fe-2S]-[ferredoxin] + S-adenosyl-L-homocysteine. It carries out the reaction adenosine(37) in tRNA + 2 reduced [2Fe-2S]-[ferredoxin] + 2 S-adenosyl-L-methionine = 2-methyladenosine(37) in tRNA + 5'-deoxyadenosine + L-methionine + 2 oxidized [2Fe-2S]-[ferredoxin] + S-adenosyl-L-homocysteine. Its function is as follows. Specifically methylates position 2 of adenine 2503 in 23S rRNA and position 2 of adenine 37 in tRNAs. m2A2503 modification seems to play a crucial role in the proofreading step occurring at the peptidyl transferase center and thus would serve to optimize ribosomal fidelity. This Nitrobacter winogradskyi (strain ATCC 25391 / DSM 10237 / CIP 104748 / NCIMB 11846 / Nb-255) protein is Dual-specificity RNA methyltransferase RlmN.